The sequence spans 391 residues: 3-ketoacyl-CoA thiolase (391 aa).

Residue C95 is the Acyl-thioester intermediate of the active site. Active-site proton acceptor residues include H347 and C377.

It belongs to the thiolase-like superfamily. Thiolase family. In terms of assembly, heterotetramer of two alpha chains (FadB) and two beta chains (FadA).

The protein localises to the cytoplasm. It carries out the reaction an acyl-CoA + acetyl-CoA = a 3-oxoacyl-CoA + CoA. The protein operates within lipid metabolism; fatty acid beta-oxidation. Catalyzes the final step of fatty acid oxidation in which acetyl-CoA is released and the CoA ester of a fatty acid two carbons shorter is formed. This chain is 3-ketoacyl-CoA thiolase, found in Pseudomonas aeruginosa (strain ATCC 15692 / DSM 22644 / CIP 104116 / JCM 14847 / LMG 12228 / 1C / PRS 101 / PAO1).